A 718-amino-acid polypeptide reads, in one-letter code: Phenylalanine--tRNA ligase beta subunit (718 aa).

One can recognise a tRNA-binding domain in the interval 40–153 (FLNVSKIKFG…KADLKQDPID (114 aa)). The 76-residue stretch at 387-462 (DKKESFNFVW…RFYGYENLVF (76 aa)) folds into the B5 domain. Residues D440, D446, E449, and E450 each coordinate Mg(2+).

Belongs to the phenylalanyl-tRNA synthetase beta subunit family. Type 1 subfamily. Tetramer of two alpha and two beta subunits. The cofactor is Mg(2+).

It localises to the cytoplasm. It catalyses the reaction tRNA(Phe) + L-phenylalanine + ATP = L-phenylalanyl-tRNA(Phe) + AMP + diphosphate + H(+). This is Phenylalanine--tRNA ligase beta subunit from Mycoplasmopsis pulmonis (strain UAB CTIP) (Mycoplasma pulmonis).